Reading from the N-terminus, the 409-residue chain is Elongation factor Tu (409 aa).

Residues 10–214 enclose the tr-type G domain; sequence KPHVNIGTIG…AVDDNIPEPE (205 aa). The segment at 19–26 is G1; it reads GHVDHGKT. Residue 19–26 coordinates GTP; sequence GHVDHGKT. T26 contacts Mg(2+). The tract at residues 60-64 is G2; sequence GITIN. A G3 region spans residues 81 to 84; that stretch reads DCPG. GTP is bound by residues 81-85 and 136-139; these read DCPGH and NKKD. Positions 136–139 are G4; that stretch reads NKKD. The tract at residues 174 to 176 is G5; it reads SAL.

It belongs to the TRAFAC class translation factor GTPase superfamily. Classic translation factor GTPase family. EF-Tu/EF-1A subfamily. As to quaternary structure, monomer.

The protein resides in the cytoplasm. It carries out the reaction GTP + H2O = GDP + phosphate + H(+). GTP hydrolase that promotes the GTP-dependent binding of aminoacyl-tRNA to the A-site of ribosomes during protein biosynthesis. The chain is Elongation factor Tu from Crocosphaera subtropica (strain ATCC 51142 / BH68) (Cyanothece sp. (strain ATCC 51142)).